The chain runs to 342 residues: Farnesyl pyrophosphate synthase (342 aa).

Isopentenyl diphosphate is bound by residues Lys47, Arg50, and Gln86. Asp93 and Asp97 together coordinate Mg(2+). Arg102 serves as a coordination point for dimethylallyl diphosphate. Residue Arg103 coordinates isopentenyl diphosphate. Dimethylallyl diphosphate is bound by residues Lys190, Thr191, Gln229, Lys246, and Lys255.

The protein belongs to the FPP/GGPP synthase family. Homodimer. Mg(2+) serves as cofactor. As to expression, mostly expressed in roots and seeds, and to a lower extent, in leaves and stems.

It is found in the cytoplasm. The enzyme catalyses isopentenyl diphosphate + dimethylallyl diphosphate = (2E)-geranyl diphosphate + diphosphate. It catalyses the reaction isopentenyl diphosphate + (2E)-geranyl diphosphate = (2E,6E)-farnesyl diphosphate + diphosphate. Its pathway is isoprenoid biosynthesis; farnesyl diphosphate biosynthesis; farnesyl diphosphate from geranyl diphosphate and isopentenyl diphosphate: step 1/1. It participates in isoprenoid biosynthesis; geranyl diphosphate biosynthesis; geranyl diphosphate from dimethylallyl diphosphate and isopentenyl diphosphate: step 1/1. Stimulated by methyl jasmonate (MeJA). In terms of biological role, catalyzes the sequential condensation of isopentenyl pyrophosphate with the allylic pyrophosphates, dimethylallyl pyrophosphate, and then with the resultant geranylpyrophosphate to the ultimate product farnesyl pyrophosphate. Component of the triterpene saponins (e.g. ginsenosides or panaxosides) and phytosterols biosynthetic pathways. Promotes the accumulation of ginsenosides. This Panax ginseng (Korean ginseng) protein is Farnesyl pyrophosphate synthase.